A 364-amino-acid polypeptide reads, in one-letter code: tRNA 2-selenouridine synthase (364 aa).

The Rhodanese domain maps to 14–137; that stretch reads LIADTPIIDV…LRQTTIQATI (124 aa). C97 (S-selanylcysteine intermediate) is an active-site residue.

The protein belongs to the SelU family. As to quaternary structure, monomer.

The enzyme catalyses 5-methylaminomethyl-2-thiouridine(34) in tRNA + selenophosphate + (2E)-geranyl diphosphate + H2O + H(+) = 5-methylaminomethyl-2-selenouridine(34) in tRNA + (2E)-thiogeraniol + phosphate + diphosphate. It catalyses the reaction 5-methylaminomethyl-2-thiouridine(34) in tRNA + (2E)-geranyl diphosphate = 5-methylaminomethyl-S-(2E)-geranyl-thiouridine(34) in tRNA + diphosphate. The catalysed reaction is 5-methylaminomethyl-S-(2E)-geranyl-thiouridine(34) in tRNA + selenophosphate + H(+) = 5-methylaminomethyl-2-(Se-phospho)selenouridine(34) in tRNA + (2E)-thiogeraniol. It carries out the reaction 5-methylaminomethyl-2-(Se-phospho)selenouridine(34) in tRNA + H2O = 5-methylaminomethyl-2-selenouridine(34) in tRNA + phosphate. In terms of biological role, involved in the post-transcriptional modification of the uridine at the wobble position (U34) of tRNA(Lys), tRNA(Glu) and tRNA(Gln). Catalyzes the conversion of 2-thiouridine (S2U-RNA) to 2-selenouridine (Se2U-RNA). Acts in a two-step process involving geranylation of 2-thiouridine (S2U) to S-geranyl-2-thiouridine (geS2U) and subsequent selenation of the latter derivative to 2-selenouridine (Se2U) in the tRNA chain. This Escherichia coli O8 (strain IAI1) protein is tRNA 2-selenouridine synthase.